Here is a 421-residue protein sequence, read N- to C-terminus: Serine--tRNA ligase (421 aa).

229 to 231 (TAE) serves as a coordination point for L-serine. Residue 260–262 (RAE) participates in ATP binding. Glu-283 contributes to the L-serine binding site. ATP is bound at residue 347-350 (EISS). Ser-383 contacts L-serine.

The protein belongs to the class-II aminoacyl-tRNA synthetase family. Type-1 seryl-tRNA synthetase subfamily. As to quaternary structure, homodimer. The tRNA molecule binds across the dimer.

It is found in the cytoplasm. The enzyme catalyses tRNA(Ser) + L-serine + ATP = L-seryl-tRNA(Ser) + AMP + diphosphate + H(+). It catalyses the reaction tRNA(Sec) + L-serine + ATP = L-seryl-tRNA(Sec) + AMP + diphosphate + H(+). It functions in the pathway aminoacyl-tRNA biosynthesis; selenocysteinyl-tRNA(Sec) biosynthesis; L-seryl-tRNA(Sec) from L-serine and tRNA(Sec): step 1/1. Its function is as follows. Catalyzes the attachment of serine to tRNA(Ser). Is also able to aminoacylate tRNA(Sec) with serine, to form the misacylated tRNA L-seryl-tRNA(Sec), which will be further converted into selenocysteinyl-tRNA(Sec). This Desulfitobacterium hafniense (strain DSM 10664 / DCB-2) protein is Serine--tRNA ligase.